Here is a 579-residue protein sequence, read N- to C-terminus: Type II methyltransferase M.BseCI (579 aa).

It belongs to the N(4)/N(6)-methyltransferase family.

The enzyme catalyses a 2'-deoxyadenosine in DNA + S-adenosyl-L-methionine = an N(6)-methyl-2'-deoxyadenosine in DNA + S-adenosyl-L-homocysteine + H(+). Functionally, a gamma subtype methylase, recognizes the double-stranded sequence 5'-ATCGAT-3', methylation on A-5 on both strands, and protects the DNA from cleavage by the BanIII endonuclease. The polypeptide is Type II methyltransferase M.BseCI (Geobacillus stearothermophilus (Bacillus stearothermophilus)).